Consider the following 568-residue polypeptide: Urease subunit alpha (568 aa).

Residues 130–568 form the Urease domain; the sequence is GGIDTHIHFI…LPMAQRYFLF (439 aa). 3 residues coordinate Ni(2+): His-135, His-137, and Lys-218. Lys-218 carries the N6-carboxylysine modification. His-220 serves as a coordination point for substrate. Ni(2+) is bound by residues His-247 and His-273. Residue His-321 is the Proton donor of the active site. Ni(2+) is bound at residue Asp-361.

It belongs to the metallo-dependent hydrolases superfamily. Urease alpha subunit family. Heterotrimer of UreA (gamma), UreB (beta) and UreC (alpha) subunits. Three heterotrimers associate to form the active enzyme. Requires Ni cation as cofactor. Post-translationally, carboxylation allows a single lysine to coordinate two nickel ions.

The protein resides in the cytoplasm. The enzyme catalyses urea + 2 H2O + H(+) = hydrogencarbonate + 2 NH4(+). Its pathway is nitrogen metabolism; urea degradation; CO(2) and NH(3) from urea (urease route): step 1/1. This is Urease subunit alpha from Burkholderia ambifaria (strain ATCC BAA-244 / DSM 16087 / CCUG 44356 / LMG 19182 / AMMD) (Burkholderia cepacia (strain AMMD)).